An 851-amino-acid polypeptide reads, in one-letter code: DEAD-box ATP-dependent RNA helicase 29 (851 aa).

The interval 1–49 (MARLNPSKPSSRGGKPRSSSADAMAEHKPPPGRPKREGEGASKKKAKSG) is disordered. The segment covering 7-20 (SKPSSRGGKPRSSS) has biased composition (low complexity). The span at 24 to 42 (MAEHKPPPGRPKREGEGAS) shows a compositional bias: basic and acidic residues. Positions 49 to 77 (GGFESMGLCEEVYRGVRHKGYRVPTPIQR) match the Q motif motif. In terms of domain architecture, Helicase ATP-binding spans 80–253 (MPLILAGHDI…KAGLRDPQIV (174 aa)). 93–100 (ARTGSGKT) is an ATP binding site. Residues 201–204 (DEAD) carry the DEAD box motif. Residues 277–426 (KLAALLYLVR…PAPTEEELLK (150 aa)) form the Helicase C-terminal domain. Positions 702-851 (KWQQKTHRSI…KGKMKGKGTR (150 aa)) are disordered. Residues 733-746 (RGNRKHTAAGRGRR) show a composition bias toward basic residues. Composition is skewed to basic and acidic residues over residues 773–787 (DIARMKNRSTKESKF) and 796–825 (RHDGPSKDGKFQKNRRPDGNGKNRRPDGNG). Positions 841-851 (GKGKMKGKGTR) are enriched in basic residues.

Belongs to the DEAD box helicase family. DDX54/DBP10 subfamily.

It carries out the reaction ATP + H2O = ADP + phosphate + H(+). The chain is DEAD-box ATP-dependent RNA helicase 29 from Oryza sativa subsp. indica (Rice).